The chain runs to 986 residues: Vacuolar membrane protease (986 aa).

Over 1–20 the chain is Cytoplasmic; sequence MATPRAQKFNPIAFTPGPVT. A helical transmembrane segment spans residues 21-41; it reads LITTIVYLALLIPILVISLVV. The Vacuolar portion of the chain corresponds to 42 to 392; that stretch reads PPAPETSPEG…AFAVFRLHTL (351 aa). Asparagine 53, asparagine 116, and asparagine 119 each carry an N-linked (GlcNAc...) asparagine glycan. Histidine 175 and aspartate 187 together coordinate Zn(2+). Glutamate 221 (proton acceptor) is an active-site residue. Position 222 (glutamate 222) interacts with Zn(2+). N-linked (GlcNAc...) asparagine glycosylation occurs at asparagine 238. Residues glutamate 247 and histidine 320 each coordinate Zn(2+). A helical transmembrane segment spans residues 393-413; that stretch reads FALSVTLLIVAPLVIFITAIV. Residues 414–447 lie on the Cytoplasmic side of the membrane; it reads LSKTDRMYLFSMSKSLGGTDERVSLRGLRGLFRT. Residues 448–468 form a helical membrane-spanning segment; the sequence is PIILAVATVIPIGLAYLLEKV. Residues 469-477 are Vacuolar-facing; that stretch reads NPYIVHSSQ. Residues 478-498 form a helical membrane-spanning segment; that stretch reads FSVWSMMISVWIFLAWFLACA. At 499-509 the chain is on the cytoplasmic side; sequence ADFFRPSALHR. A helical transmembrane segment spans residues 510–530; that stretch reads AYSYTWIFIATWVMLVINTVY. The Vacuolar portion of the chain corresponds to 531–534; it reads ANQK. Residues 535–555 form a helical membrane-spanning segment; the sequence is GIAAGYFVFFYFSGSFLATWV. The Cytoplasmic segment spans residues 556–665; the sequence is SYLELFALPR…WSWTLPRWTW (110 aa). A disordered region spans residues 595 to 620; sequence ELPSDTGPHAEYPGDADETDPTESTS. Residues 666–686 form a helical membrane-spanning segment; it reads VLQLLLLAPIVLILVGQLALF. Residues 687-702 lie on the Vacuolar side of the membrane; that stretch reads LTTSMSQVGSDGVSTF. A helical transmembrane segment spans residues 703–723; that stretch reads IVYLACAVFTTLLFAPLFPFI. Over 724–729 the chain is Cytoplasmic; it reads HRFTYH. A helical membrane pass occupies residues 730–750; it reads IPTFLFLVFVGTLIYNLVAFP. Topologically, residues 751–986 are vacuolar; it reads FSPANRLKMF…VEASHGITIQ (236 aa). N-linked (GlcNAc...) asparagine glycosylation is found at asparagine 797, asparagine 840, and asparagine 948.

The protein belongs to the peptidase M28 family. Zn(2+) serves as cofactor.

It localises to the vacuole membrane. Its function is as follows. May be involved in vacuolar sorting and osmoregulation. In Blastomyces gilchristii (strain SLH14081) (Blastomyces dermatitidis), this protein is Vacuolar membrane protease.